The primary structure comprises 328 residues: MNIWMTVLVLVVKAVVLALCVTLAVAVFLLFMRKFLAYFAYRVGPVKVGPWGVLQPIADVIKMLFKEDIMPEQADPLIYRLAPVIAFFCALGVWVVIPWAPRGSWWSSMADPNAGVLVILAIAAMGVYGTALGGWASQNKYGLLGSMRATAQMISYELAMAMSLLGVILMTGSVSMYDIVDAQRNMINLFPQFLGFLVFYIASLAEAGWTPFDLPESETELVAGYHTDYGGMRFGLFFLTELTHAVNSAVLSTTFFLGGYNPWFGLTMIPGFVWFLLKVILMVFVLYWIKCTFPRFRYDRLMVFGWKVLLPVAALNLVGTAIYVALWA.

The next 8 membrane-spanning stretches (helical) occupy residues 11 to 31, 81 to 101, 116 to 136, 154 to 174, 189 to 209, 235 to 257, 269 to 289, and 308 to 328; these read VVKA…FLLF, LAPV…PWAP, VLVI…GGWA, ISYE…TGSV, LFPQ…EAGW, GLFF…TFFL, IPGF…LYWI, and VLLP…ALWA.

This sequence belongs to the complex I subunit 1 family. In terms of assembly, NDH-1 is composed of 14 different subunits. Subunits NuoA, H, J, K, L, M, N constitute the membrane sector of the complex.

It is found in the cell membrane. It carries out the reaction a quinone + NADH + 5 H(+)(in) = a quinol + NAD(+) + 4 H(+)(out). NDH-1 shuttles electrons from NADH, via FMN and iron-sulfur (Fe-S) centers, to quinones in the respiratory chain. The immediate electron acceptor for the enzyme in this species is believed to be ubiquinone. Couples the redox reaction to proton translocation (for every two electrons transferred, four hydrogen ions are translocated across the cytoplasmic membrane), and thus conserves the redox energy in a proton gradient. This subunit may bind ubiquinone. This Symbiobacterium thermophilum (strain DSM 24528 / JCM 14929 / IAM 14863 / T) protein is NADH-quinone oxidoreductase subunit H 1.